Here is a 141-residue protein sequence, read N- to C-terminus: Arsenate reductase (141 aa).

Catalysis depends on Cys-12, which acts as the Nucleophile; cysteine thioarsenate intermediate.

The protein belongs to the ArsC family.

It carries out the reaction [glutaredoxin]-dithiol + arsenate + glutathione + H(+) = glutathionyl-S-S-[glutaredoxin] + arsenite + H2O. Functionally, involved in resistance to arsenate. Catalyzes the reduction of arsenate [As(V)] to arsenite [As(III)]. This Escherichia coli protein is Arsenate reductase.